The chain runs to 342 residues: Fructose-1,6-bisphosphatase class 1 (342 aa).

Residues Glu-97, Asp-119, Leu-121, and Asp-122 each contribute to the Mg(2+) site. Substrate is bound by residues 122–125, Asn-215, Tyr-247, and Lys-280; that span reads DGSS. A Mg(2+)-binding site is contributed by Glu-286.

The protein belongs to the FBPase class 1 family. As to quaternary structure, homotetramer. It depends on Mg(2+) as a cofactor.

It localises to the cytoplasm. It catalyses the reaction beta-D-fructose 1,6-bisphosphate + H2O = beta-D-fructose 6-phosphate + phosphate. Its pathway is carbohydrate biosynthesis; gluconeogenesis. This chain is Fructose-1,6-bisphosphatase class 1, found in Leptospira borgpetersenii serovar Hardjo-bovis (strain JB197).